The sequence spans 781 residues: MKPGATGESDLAEVLPQHKFDSKSLEAYLNQHLSGFGAEREATLTIAQYRAGKSNPTFYLQKGFQTYVLRKKPPGSLLPKAHQIDREFKVQKALFSIGFPVPKPILYCSDTSVIGTEFYIMEHVQGRIFRDLTIPGVSPAERSALYVAIVETLAQLHSLNIQSLQLEGYGIGAGYCKRQVSTWTKQYQAAAHQDIPAMQQLSEWLMKNLPDNDNEENLIHGDFRLDNIIFHPKECRVIAVLDWELSTIGHPLSDLAHFSLFYFWPRTVPMINQGSYSEENSGIPSMEELISIYCRCRGINSSLPNWNFFLALSYFKMAGIAQGVYSRYLLGNNSSEDSFLFANIVQPLAETGLQLSKRTFSTVLPQIDTAGQLFVQTRKGQEVLIKVKHFMKQHILPAEKEVTEFYVQNENSVDKWGKPLVIDKLKEMAKAEGLWNLFLPAVSGLSQVDYALIAEETGKCFFAPDVFNCQAPDTGNMEILHLYGSEEQKKQWLEPLLQGNITSCFCMTEPDVASSDATNIECSIQREEDSYVINGKKWWSSGAGNPKCKIAIVLGRTQNTSLSRHKQHSMILVPMNTPGVEIIRPLSVFGYTDNFHGGHFEIHFNQVRVPATNLILGEGRGFEISQGRLGPGRIHHCMRTVGLAERALQIMCERATQRIAFKKKLYAHEVVAHWIAESRIAIEKIRLLTLKAAHSMDTLGSAGAKKEIAMIKVAAPRAVSKIVDWAIQVCGGAGVSQDYPLANMYAITRVLRLADGPDEVHLSAIATMELRDQAKRLTAKI.

The residue at position 177 (Lys177) is an N6-acetyllysine. Tyr325 bears the Phosphotyrosine mark. At Lys392 the chain carries N6-succinyllysine. FAD contacts are provided by residues 505–515 (FCMTEPDVASS), 513–515 (ASS), 539–541 (WSS), and Ser541. Substrate is bound at residue Ser515. 630–633 (GPGR) contributes to the substrate binding site. FAD is bound by residues Arg658, Gln728, and 728–732 (QVCGG). Substrate is bound at residue Gly756. FAD-binding positions include 757 to 759 (PDE) and Glu759.

Belongs to the acyl-CoA dehydrogenase family. In terms of assembly, homodimer. It depends on FAD as a cofactor.

The protein resides in the peroxisome. Its subcellular location is the mitochondrion membrane. It carries out the reaction a 2,3-saturated acyl-CoA + oxidized [electron-transfer flavoprotein] + H(+) = a (2E)-enoyl-CoA + reduced [electron-transfer flavoprotein]. It catalyses the reaction docosanoyl-CoA + oxidized [electron-transfer flavoprotein] + H(+) = (2E)-docosenoyl-CoA + reduced [electron-transfer flavoprotein]. The catalysed reaction is tetracosanoyl-CoA + oxidized [electron-transfer flavoprotein] + H(+) = (2E)-tetracosenoyl-CoA + reduced [electron-transfer flavoprotein]. The enzyme catalyses eicosanoyl-CoA + oxidized [electron-transfer flavoprotein] + H(+) = (2E)-eicosenoyl-CoA + reduced [electron-transfer flavoprotein]. It carries out the reaction hexacosanoyl-CoA + oxidized [electron-transfer flavoprotein] + H(+) = (2E)-hexacosenoyl-CoA + reduced [electron-transfer flavoprotein]. It catalyses the reaction tricosanoyl-CoA + oxidized [electron-transfer flavoprotein] + H(+) = (2E)-tricosenoyl-CoA + reduced [electron-transfer flavoprotein]. It functions in the pathway lipid metabolism; fatty acid beta-oxidation. Acyl-CoA dehydrogenase, that exhibits maximal activity towards saturated C22-CoA. Probably participates in beta-oxydation and energy production but could also play a role in the metabolism of specific fatty acids to control fatty acids composition of cellular lipids in brain. This Pongo abelii (Sumatran orangutan) protein is Acyl-CoA dehydrogenase family member 11 (ACAD11).